A 126-amino-acid polypeptide reads, in one-letter code: Profilin (126 aa).

This sequence belongs to the profilin family. As to quaternary structure, occurs in many kinds of cells as a complex with monomeric actin in a 1:1 ratio.

Its subcellular location is the cytoplasm. The protein localises to the cytoskeleton. Its function is as follows. Binds to actin and affects the structure of the cytoskeleton. At high concentrations, profilin prevents the polymerization of actin, whereas it enhances it at low concentrations. By binding to PIP2, it inhibits the formation of IP3 and DG. In Saccharomyces cerevisiae (strain ATCC 204508 / S288c) (Baker's yeast), this protein is Profilin (PFY1).